The following is a 480-amino-acid chain: Voltage-gated potassium channel regulatory subunit KCNG2 (480 aa).

2 disordered regions span residues 1–25 (MARL…GRGG) and 144–167 (AAEA…LGSG). The Cytoplasmic segment spans residues 1 to 187 (MARLPGHPEV…DVVENPHSGL (187 aa)). A helical transmembrane segment spans residues 188 to 209 (AGKLFAYVSVAFVAVTAVGLCL). The Extracellular portion of the chain corresponds to 210–230 (STMPDVRAEEERGECSTKCRN). A helical transmembrane segment spans residues 231–252 (LFVLETVCVAWFSFEFLLRSLQ). Topologically, residues 253–263 (AESKCAFLRTP) are cytoplasmic. The helical transmembrane segment at 264-284 (LAIIDILAILPFYVSLLAGLA) threads the bilayer. The Extracellular segment spans residues 285–296 (AGPTGSKMLERA). A helical; Voltage-sensor membrane pass occupies residues 297–317 (GLVLRLLRALRVLYVMRLARH). The Cytoplasmic segment spans residues 318–332 (SLGLRSLGLTVRRCA). Residues 333-354 (REFGLLLLFLCVAMALFAPLVH) form a helical membrane-spanning segment. The Extracellular portion of the chain corresponds to 355 to 369 (LAERELGAHRDFSSV). An intramembrane region (helical) is located at residues 370–381 (PASYWWAVISMT). Positions 382–387 (TVGYGD) match the Selectivity filter motif. Residues 382–389 (TVGYGDMV) lie within the membrane without spanning it. Topologically, residues 390–396 (PRSLPGQ) are extracellular. The chain crosses the membrane as a helical span at residues 397 to 425 (VVALSSILSGILLMAFPVTSIFHTFSRSY). The Cytoplasmic segment spans residues 426–480 (SELKEQQQRAASPEPVLREDSTRDDSTRSASATEDSSQDPETAGAAGSLPGPVGP). The disordered stretch occupies residues 429 to 480 (KEQQQRAASPEPVLREDSTRDDSTRSASATEDSSQDPETAGAAGSLPGPVGP). The segment covering 441 to 452 (VLREDSTRDDST) has biased composition (basic and acidic residues).

This sequence belongs to the potassium channel family. G (TC 1.A.1.2) subfamily. Kv6.2/KCNG2 sub-subfamily. As to quaternary structure, heterodimer with KCNB1. Highly expressed in heart, in particular in right and left atrium, and detected at lower levels in the right and left ventricle.

Its subcellular location is the cell membrane. Its function is as follows. Regulatory alpha-subunit of the voltage-gated potassium (Kv) channel which, when coassembled with KCNB1, can modulate the kinetics and conductance-voltage relationship. Modulates channel activity by shifting the threshold and the half-maximal activation to more negative values. Potassium channel subunit that does not form functional channels by itself. In Rattus norvegicus (Rat), this protein is Voltage-gated potassium channel regulatory subunit KCNG2.